The chain runs to 391 residues: Dual-specificity RNA methyltransferase RlmN (391 aa).

Residues M1–I20 are disordered. Positions T10–I20 are enriched in basic and acidic residues. E120 serves as the catalytic Proton acceptor. One can recognise a Radical SAM core domain in the interval D126 to D366. C133 and C371 are oxidised to a cystine. The [4Fe-4S] cluster site is built by C140, C144, and C147. Residues G195–E196, S227, S249–H251, and N328 each bind S-adenosyl-L-methionine. C371 acts as the S-methylcysteine intermediate in catalysis.

Belongs to the radical SAM superfamily. RlmN family. [4Fe-4S] cluster serves as cofactor.

Its subcellular location is the cytoplasm. The catalysed reaction is adenosine(2503) in 23S rRNA + 2 reduced [2Fe-2S]-[ferredoxin] + 2 S-adenosyl-L-methionine = 2-methyladenosine(2503) in 23S rRNA + 5'-deoxyadenosine + L-methionine + 2 oxidized [2Fe-2S]-[ferredoxin] + S-adenosyl-L-homocysteine. It carries out the reaction adenosine(37) in tRNA + 2 reduced [2Fe-2S]-[ferredoxin] + 2 S-adenosyl-L-methionine = 2-methyladenosine(37) in tRNA + 5'-deoxyadenosine + L-methionine + 2 oxidized [2Fe-2S]-[ferredoxin] + S-adenosyl-L-homocysteine. Specifically methylates position 2 of adenine 2503 in 23S rRNA and position 2 of adenine 37 in tRNAs. m2A2503 modification seems to play a crucial role in the proofreading step occurring at the peptidyl transferase center and thus would serve to optimize ribosomal fidelity. In Zymomonas mobilis subsp. mobilis (strain ATCC 31821 / ZM4 / CP4), this protein is Dual-specificity RNA methyltransferase RlmN.